The chain runs to 102 residues: Large ribosomal subunit protein bL21 (102 aa).

Belongs to the bacterial ribosomal protein bL21 family. In terms of assembly, part of the 50S ribosomal subunit. Contacts protein L20.

Functionally, this protein binds to 23S rRNA in the presence of protein L20. In Geobacter sulfurreducens (strain ATCC 51573 / DSM 12127 / PCA), this protein is Large ribosomal subunit protein bL21.